The chain runs to 659 residues: tRNA uridine 5-carboxymethylaminomethyl modification enzyme MnmG (659 aa).

FAD is bound at residue 13–18; the sequence is GGGHAG. 281–295 is an NAD(+) binding site; it reads GPRYCPSVEDKINRF.

This sequence belongs to the MnmG family. In terms of assembly, homodimer. Heterotetramer of two MnmE and two MnmG subunits. It depends on FAD as a cofactor.

The protein resides in the cytoplasm. Its function is as follows. NAD-binding protein involved in the addition of a carboxymethylaminomethyl (cmnm) group at the wobble position (U34) of certain tRNAs, forming tRNA-cmnm(5)s(2)U34. This chain is tRNA uridine 5-carboxymethylaminomethyl modification enzyme MnmG, found in Delftia acidovorans (strain DSM 14801 / SPH-1).